Reading from the N-terminus, the 2348-residue chain is Transcription factor HIVEP3 (2348 aa).

Positions 1-105 (MDPDQSIKGT…AFMSPGKPEH (105 aa)) are disordered. Residues 27-72 (IQTSVSSSAPYPGSGTTAPSESATQELLATQPFSGPSQEKTGQQQK) are compositionally biased toward polar residues. 2 C2H2-type zinc fingers span residues 185-207 (YICQ…IRSH) and 213-235 (YPCG…RKSH). Residues 185–235 (YICQYCSRPCAKPSVLQKHIRSHTGERPYPCGPCGFSFKTKSNLYKHRKSH) form a ZAS1 region. The tract at residues 204–1055 (IRSHTGERPY…KGKQESSEEP (852 aa)) is no DNA binding activity or transactivation activity, but complete prevention of TRAF-dependent NF-Kappa-B activation; associates with TRAF2 and JUN. Disordered regions lie at residues 239–401 (IKAG…SPPN), 475–532 (DSVK…PLLR), and 561–628 (ADPE…TKKG). The acidic 1 stretch occupies residues 257 to 280 (EMERIPGEEFEEPTEGESTDSEEE). A compositionally biased stretch (acidic residues) spans 264-281 (EEFEEPTEGESTDSEEET). Positions 298-323 (PLLSSSLYSSGSHGSSQERCSLSQSS) are enriched in low complexity. Residues 338–352 (SSEHPLSHKPEDTHT) are compositionally biased toward basic and acidic residues. Polar residues-rich tracts occupy residues 372–401 (TFLS…SPPN) and 485–495 (TRRSSVESPKS). Low complexity-rich tracts occupy residues 513–527 (QSLL…STHP) and 589–605 (PLGG…SSKD). Residues 606–623 (PTSKPSDEPEPKESDLTK) are compositionally biased toward basic and acidic residues. The CCHC HIVEP-type zinc-finger motif lies at 633 to 663 (GANYECTICGARYKKRDNYEAHKKYYCSELQ). Disordered regions lie at residues 692–1098 (KLGA…PPYT), 1229–1274 (LPPV…TSAP), 1386–1427 (EGCS…KADE), 1441–1555 (STED…EGTD), and 1654–1694 (EVHL…GEPA). A compositionally biased stretch (low complexity) spans 736–749 (STKSPAEASKSAPS). An acidic 2 region spans residues 844–865 (EEPDRPDTEPEPPPKEPEKTEE). Basic and acidic residues predominate over residues 845-865 (EPDRPDTEPEPPPKEPEKTEE). The short motif at 885-891 (PKKKRLR) is the Nuclear localization signal element. Low complexity predominate over residues 893–929 (AEMAQSSGESSFESSVPLSRSPSQESSISLSGSSRSA). Over residues 930 to 939 (SFDREDHGKA) the composition is skewed to basic and acidic residues. 3 stretches are compositionally biased toward polar residues: residues 975–985 (SEQSPNVPHSS), 1062–1073 (TKSSVPQISVGT), and 1247–1256 (SSSTEYSSDI). Positions 1409–1433 (METQQQKRVKEEEASKADEKLELVS) form a coiled coil. 3 stretches are compositionally biased toward basic and acidic residues: residues 1416-1427 (RVKEEEASKADE), 1442-1452 (TEDRKKTEKPH), and 1518-1527 (VKKEDPKEQT). The segment covering 1538-1547 (LPLSDTSPKP) has biased composition (low complexity). Basic and acidic residues predominate over residues 1665 to 1694 (SQKDPARVEKEEKQGKAEEGTPTSKRGEPA). 2 consecutive C2H2-type zinc fingers follow at residues 1720-1742 (YVCE…IRTH) and 1748-1772 (YVCK…SKAH). Residues 1720–1772 (YVCEECGIRCKKPSMLKKHIRTHTDVRPYVCKHCHFAFKTKGNLTKHMKSKAH) are ZAS2. The acidic 3 stretch occupies residues 1783–1841 (EELEAEEGTSDDLHQDSEGQEGAEAVEEHQFSDLEDSDSDSDLDEDEEEEEEEEESQDE). Disordered stretches follow at residues 1786–1990 (EAEE…HLCG) and 2009–2038 (PAGL…ESPP). Acidic residues predominate over residues 1815-1840 (DLEDSDSDSDLDEDEEEEEEEEESQD). The segment covering 1871-1902 (PDSTSDEVPQGSSISEATHLTASSCSTPSRGT) has biased composition (polar residues). A run of 5 repeats spans residues 1897 to 1900 (TPSR), 1927 to 1930 (SPRR), 1933 to 1936 (SPSK), 1961 to 1964 (SPAR), and 2024 to 2027 (SPTR). Residues 1952–1961 (KNDSSPQQCS) show a composition bias toward polar residues. Residues 2053–2148 (SPSADKSGLG…QLLSRAPCPL (96 aa)) are 5 X 4 AA tandem repeats of [ST]-P-X-[RK]. 2 disordered regions span residues 2184–2265 (SDLT…QGHQ) and 2284–2348 (KASS…PPSI). Residues 2203–2216 (SPSASVSPVAKVSK) are compositionally biased toward low complexity. Residues 2293-2314 (RSSSMDCLAETSTYSPPRSRNL) are compositionally biased toward polar residues.

As to quaternary structure, interacts with TRAF1 and TRAF2 as well as with JUN. Forms a multimeric complex with RUNX2 and E3 ubiquitin ligase WWP1. Post-translationally, phosphorylated on threonine and serine residues. Phosphorylation by cyclin-dependent kinase CDK1 decreases HIVEP3 DNA binding affinity, and by epidermal growth factor receptor kinase increases its DNA binding affinity. As to expression, expressed in macrophages, lymphocytes, brain, thymus, spleen and bone marrow. Expressed in osteoblasts, whole bone and, to a lesser extent, in osteoclasts.

It localises to the cytoplasm. Its subcellular location is the nucleus. Functionally, plays a role of transcription factor; binds to recognition signal sequences (Rss heptamer) for somatic recombination of immunoglobulin and T-cell receptor gene segments; Also binds to the kappa-B motif of gene such as S100A4, involved in cell progression and differentiation. Kappa-B motif is a gene regulatory element found in promoters and enhancers of genes involved in immunity, inflammation, and growth and that responds to viral antigens, mitogens, and cytokines. Involvement of HIVEP3 in cell growth is strengthened by the fact that its down-regulation promotes cell cycle progression with ultimate formation of multinucleated giant cells. Strongly inhibits TNF-alpha-induced NF-kappa-B activation; Interferes with nuclear factor NF-kappa-B by several mechanisms: as transcription factor, by competing for Kappa-B motif and by repressing transcription in the nucleus; through a non transcriptional process, by inhibiting nuclear translocation of RELA by association with TRAF2, an adapter molecule in the tumor necrosis factor signaling, which blocks the formation of IKK complex. Interaction with TRAF proteins inhibits both NF-Kappa-B-mediated and c-Jun N-terminal kinase/JNK-mediated responses that include apoptosis and pro-inflammatory cytokine gene expression. Positively regulates the expression of IL2 in T-cell. Essential regulator of adult bone formation. The protein is Transcription factor HIVEP3 (Hivep3) of Mus musculus (Mouse).